The primary structure comprises 1134 residues: MTSSGKIRIYELSRDLHLENKDVLDAANKLSISAKSHSSSISDEDATKIKKLLLAQKSSNSSSPPAKQKPNKEILTLKKAITSPPTKSEANAKTNASLDKTSSLKNKPASPKKEIPTSPKPPSAAKQRVDAIKKPTPSISKNNSLKVQPTIKKPSLVSPKQPNIPSPPIAPNKGIKPTIKRQDSNNENLETNKTKAKPNIVSKPQARQIKQSSDLINRSPKTSPKQPIQEIQTNKPKAPQRPIAPPPRPKVQSQFNQKPGNNNLRGGPNQRKGIPQGAPSGQPGSTKHPRNLPTGSYKGNRVELVGAPIRRNTKPDNGGRGARDGNFRQGGPNQGPPISRQGGARRQEGGGGRGQQMRPRTGMPPGMRKPVAPGELMQLQKPTSSATPPIKRGDLNKGPKKDGISTAKPPANRPTPSAAPKRPPARTGAPGSSRKRKPDWDDAAKLEALRNKSPQKQRQKVHIIGENDDALTAETSGFAGGGQAVVLSASLARPGKPKASKKSGSKPTGALRKRKKESTRQRQRRRAMELRAAREAKQIRPEMIVVPEDNITVQELADKLSVESSEIIKSLFFKGITATVTQSLDLSTIETVAEEFGVPVLQDDIEEAAKKTVEMIEETDIKHLTRRPPVVTVMGHVDHGKTSLLDAIRKARVAAGEAGGITQHIGAYQVEVEHEKKLRTLTFLDTPGHEAFTAMRARGTKVTDVAVLVVAADDGVRPQTLEAISHARAAKVPIVVAINKIDKEGASPDRVKQELSEQELVAEEWGGDVVMMPVSAIKGENIDKLLEMILLVTEVEDLQANPARLAKGTVIEAHLDKAKGPVATLLVQNGTLKAGDVVAAGPVLGKVRAMVDENGKRLKEAGPSCPVEALGFNEVPTAGDEFEVYPDEKSARSVVGERASDARATRLAQQMASRRVSLSAMSGQVNDGDLKELNLILKADVQGSVEAILGSLEQLPKDEVQVRVLLSAPGEITETDVDLAAASGAVIIGFNTSMASGAKKAADANSVDVRDYEVIYKLLEDIQLAMEGLLEPDLVEEKIGEAEVRAIFTIGKSAVAGCYITNGKLQRNCKVRVKRADQIVFNGDLDSLRRNKDVVKDVSSGFECGIGCDRFANWKEGDTIEGYKLVTQRRKLNT.

Disordered regions lie at residues A55–G465 and L491–R524. 5 stretches are compositionally biased toward polar residues: residues Q56–P65, S83–K105, P137–V147, Q208–N234, and V251–L264. Basic and acidic residues-rich tracts occupy residues K391–G403 and P438–R450. Composition is skewed to basic residues over residues G495–G504 and L511–R524. The region spanning R626–L798 is the tr-type G domain. The segment at G635–T642 is G1. G635 to T642 lines the GTP pocket. The segment at G660–H664 is G2. Residues D685–G688 form a G3 region. GTP is bound by residues D685–H689 and N739–D742. The G4 stretch occupies residues N739–D742. Residues S775–I777 form a G5 region.

The protein belongs to the TRAFAC class translation factor GTPase superfamily. Classic translation factor GTPase family. IF-2 subfamily.

It is found in the cytoplasm. Its function is as follows. One of the essential components for the initiation of protein synthesis. Protects formylmethionyl-tRNA from spontaneous hydrolysis and promotes its binding to the 30S ribosomal subunits. Also involved in the hydrolysis of GTP during the formation of the 70S ribosomal complex. The sequence is that of Translation initiation factor IF-2 from Prochlorococcus marinus (strain SARG / CCMP1375 / SS120).